Consider the following 427-residue polypeptide: Histidine--tRNA ligase (427 aa).

Belongs to the class-II aminoacyl-tRNA synthetase family. In terms of assembly, homodimer.

It is found in the cytoplasm. It catalyses the reaction tRNA(His) + L-histidine + ATP = L-histidyl-tRNA(His) + AMP + diphosphate + H(+). The chain is Histidine--tRNA ligase from Lacticaseibacillus casei (strain BL23) (Lactobacillus casei).